Here is a 67-residue protein sequence, read N- to C-terminus: uncharacterized protein (67 aa).

To E.coli YbdD.

This is an uncharacterized protein from Escherichia coli O157:H7.